The following is a 146-amino-acid chain: Endothelial differentiation-related factor 1 homolog (146 aa).

The tract at residues 13-53 is disordered; it reads RKKGSAAQSKSKQAVTAAQRKGEAVETSKKWAAGQNKQHVV. Over residues 17–31 the composition is skewed to low complexity; that stretch reads SAAQSKSKQAVTAAQ. The span at 32–41 shows a compositional bias: basic and acidic residues; it reads RKGEAVETSK. The HTH cro/C1-type domain maps to 80-134; it reads IQQGRQNKGLTQKDLATKINEKPQIIAEYECGKAIPNNQVMGKIERAIGLKLRGK. The segment at residues 91 to 110 is a DNA-binding region (H-T-H motif); that stretch reads QKDLATKINEKPQIIAEYEC.

It localises to the nucleus. In terms of biological role, probable transcriptional coactivator. The sequence is that of Endothelial differentiation-related factor 1 homolog (edf1) from Danio rerio (Zebrafish).